Consider the following 226-residue polypeptide: NAD(P)H-hydrate epimerase (226 aa).

Positions 10 to 215 (AIELDLDLFE…ALQRKYQLNL (206 aa)) constitute a YjeF N-terminal domain. 58 to 62 (NNGGD) serves as a coordination point for (6S)-NADPHX. K(+) contacts are provided by Asn-59 and Asp-123. Residues 127–133 (GFGFKPP) and Asp-156 each bind (6S)-NADPHX. Ser-159 is a binding site for K(+).

It belongs to the NnrE/AIBP family. The cofactor is K(+).

The catalysed reaction is (6R)-NADHX = (6S)-NADHX. The enzyme catalyses (6R)-NADPHX = (6S)-NADPHX. Functionally, catalyzes the epimerization of the S- and R-forms of NAD(P)HX, a damaged form of NAD(P)H that is a result of enzymatic or heat-dependent hydration. This is a prerequisite for the S-specific NAD(P)H-hydrate dehydratase to allow the repair of both epimers of NAD(P)HX. The protein is NAD(P)H-hydrate epimerase of Drosophila pseudoobscura pseudoobscura (Fruit fly).